A 377-amino-acid chain; its full sequence is Trichodiene synthase (377 aa).

This sequence belongs to the trichodiene synthase family.

The enzyme catalyses (2E,6E)-farnesyl diphosphate = trichodiene + diphosphate. The protein operates within sesquiterpene biosynthesis; trichothecene biosynthesis. Functionally, TS is a member of the terpene cyclase group of enzymes. It catalyzes the isomerization and cyclization of farnesyl pyro-phosphate to form trichodiene, the first cyclic intermediate in the biosynthetic pathway for trichothecenes. It serves to branch trichothecene biosynthesis from the isoprenoid pathway. This Fusarium poae protein is Trichodiene synthase (TRI5).